A 363-amino-acid polypeptide reads, in one-letter code: Type-2 angiotensin II receptor (363 aa).

The Extracellular segment spans residues 1–45 (MKDNFSFAATSRNITSSLPFVNLNMSGTNDLIFNCSHKPSDKHLE). 4 N-linked (GlcNAc...) asparagine glycosylation sites follow: asparagine 4, asparagine 13, asparagine 24, and asparagine 34. Disulfide bonds link cysteine 35-cysteine 290 and cysteine 117-cysteine 195. Residues 46 to 70 (AIPVLYYLIFVIGFAVNIIVVSLFC) traverse the membrane as a helical segment. The Cytoplasmic segment spans residues 71-80 (CQKGPKKVSS). Residues 81–104 (IYIFNLAVADLLLLATLPLWATYY) form a helical membrane-spanning segment. The angiotensin II site is built by tyrosine 103 and tyrosine 104. At 105–114 (SYRYDWLFGP) the chain is on the extracellular side. The helical transmembrane segment at 115-140 (VMCKVFGSFLTLNMFASIFFITCMSV) threads the bilayer. The Cytoplasmic portion of the chain corresponds to 141–159 (DRYQSVIYPFLSQRRNPWQ). A helical transmembrane segment spans residues 160–181 (ASYVVPLVWCMACLSSLPTFYF). Residues arginine 182, tyrosine 204, and lysine 215 each contribute to the angiotensin II site. At 182–206 (RDVRTIEYLGVNACVMAFPPEKYAQ) the chain is on the extracellular side. Residues 207–232 (WSAGIALMKNVLGFIIPLIFIATCYF) traverse the membrane as a helical segment. The Cytoplasmic portion of the chain corresponds to 233 to 257 (GIRKHLLKTNSYGKNRITRDQVLKM). Residues 258–281 (AAAVVLAFIICWLPFHVLTFLDAL) traverse the membrane as a helical segment. Aspartate 279 lines the angiotensin II pocket. Residues 282 to 294 (SWMGIINSCEVMA) are Extracellular-facing. The helical transmembrane segment at 295–320 (VIDLALPFAILLGFTNSCVNPFLYCF) threads the bilayer. Aspartate 297 lines the angiotensin II pocket. Topologically, residues 321-363 (VGNRFQQKLRSMFRVPITWLQGKRETMSCRKSSSLREMDTFVS) are cytoplasmic. The segment at 324 to 333 (RFQQKLRSMF) is helix VIII. At serine 354 the chain carries Phosphoserine; by PKC.

The protein belongs to the G-protein coupled receptor 1 family. In terms of assembly, interacts with MTUS1.

The protein resides in the cell membrane. Functionally, receptor for angiotensin II, a vasoconstricting peptide. Signals primarily via a non-canonical G-protein- and beta-arrestin independent pathways. Cooperates with MTUS1 to inhibit ERK2 activation and cell proliferation. The protein is Type-2 angiotensin II receptor (AGTR2) of Meriones unguiculatus (Mongolian jird).